A 356-amino-acid polypeptide reads, in one-letter code: Histidinol-phosphate aminotransferase 2 (356 aa).

Position 217 is an N6-(pyridoxal phosphate)lysine (Lys-217).

The protein belongs to the class-II pyridoxal-phosphate-dependent aminotransferase family. Histidinol-phosphate aminotransferase subfamily. In terms of assembly, homodimer. Pyridoxal 5'-phosphate serves as cofactor.

The enzyme catalyses L-histidinol phosphate + 2-oxoglutarate = 3-(imidazol-4-yl)-2-oxopropyl phosphate + L-glutamate. The protein operates within amino-acid biosynthesis; L-histidine biosynthesis; L-histidine from 5-phospho-alpha-D-ribose 1-diphosphate: step 7/9. This chain is Histidinol-phosphate aminotransferase 2, found in Burkholderia pseudomallei (strain 1710b).